The sequence spans 199 residues: Glycerol-3-phosphate acyltransferase (199 aa).

5 helical membrane passes run alanine 3–valine 23, tryptophan 50–valine 70, aspartate 78–leucine 98, leucine 113–leucine 133, and leucine 154–phenylalanine 174.

The protein belongs to the PlsY family. As to quaternary structure, probably interacts with PlsX.

The protein localises to the cell inner membrane. It catalyses the reaction an acyl phosphate + sn-glycerol 3-phosphate = a 1-acyl-sn-glycero-3-phosphate + phosphate. It participates in lipid metabolism; phospholipid metabolism. Functionally, catalyzes the transfer of an acyl group from acyl-phosphate (acyl-PO(4)) to glycerol-3-phosphate (G3P) to form lysophosphatidic acid (LPA). This enzyme utilizes acyl-phosphate as fatty acyl donor, but not acyl-CoA or acyl-ACP. The chain is Glycerol-3-phosphate acyltransferase from Thermus thermophilus (strain ATCC BAA-163 / DSM 7039 / HB27).